The chain runs to 299 residues: Acetaldehyde dehydrogenase (299 aa).

An NAD(+)-binding site is contributed by S11–I14. The Acyl-thioester intermediate role is filled by C126. Residues S157 to N165 and N267 each bind NAD(+).

It belongs to the acetaldehyde dehydrogenase family.

It carries out the reaction acetaldehyde + NAD(+) + CoA = acetyl-CoA + NADH + H(+). The chain is Acetaldehyde dehydrogenase from Bacillus thuringiensis (strain Al Hakam).